We begin with the raw amino-acid sequence, 166 residues long: MNPSPRKRVALFTDGACLGNPGPGGWAALLRFHAHEKLLSGGEACTTNNRMELKAAIEGLKALKEPCEVDLYTDSHYLKKAFTEGWLEGWRKRGWRTAEGKPVKNRDLWEALLLAMAPHRVRFHFVKGHTGHPENERVDREARRQAQSQAKTPCPPRAPTLFHEEA.

The region spanning 5-147 (PRKRVALFTD…VDREARRQAQ (143 aa)) is the RNase H type-1 domain. Asp-14, Glu-52, Asp-74, and Asp-139 together coordinate Mg(2+). Residues 128-166 (GHTGHPENERVDREARRQAQSQAKTPCPPRAPTLFHEEA) form a disordered region. A compositionally biased stretch (basic and acidic residues) spans 131–144 (GHPENERVDREARR).

Belongs to the RNase H family. Monomer. Requires Mg(2+) as cofactor.

The enzyme catalyses Endonucleolytic cleavage to 5'-phosphomonoester.. Endonuclease that specifically degrades the RNA of RNA-DNA hybrids. This chain is Ribonuclease H (rnhA), found in Thermus thermophilus (strain ATCC 27634 / DSM 579 / HB8).